The following is a 186-amino-acid chain: UPF0301 protein Neut_0448 (186 aa).

The protein belongs to the UPF0301 (AlgH) family.

In Nitrosomonas eutropha (strain DSM 101675 / C91 / Nm57), this protein is UPF0301 protein Neut_0448.